The following is a 207-amino-acid chain: Probable GTP-binding protein EngB (207 aa).

In terms of domain architecture, EngB-type G spans 22–193; that stretch reads RVPEIVFAGR…LAHFDHYLSG (172 aa). GTP is bound by residues 30–37, 57–61, 75–78, 142–145, and 172–174; these read GRSNVGKS, GKTRL, DIPG, TKDD, and YSS. 2 residues coordinate Mg(2+): serine 37 and threonine 59.

Belongs to the TRAFAC class TrmE-Era-EngA-EngB-Septin-like GTPase superfamily. EngB GTPase family. Mg(2+) is required as a cofactor.

Functionally, necessary for normal cell division and for the maintenance of normal septation. This is Probable GTP-binding protein EngB from Chlorobium luteolum (strain DSM 273 / BCRC 81028 / 2530) (Pelodictyon luteolum).